The primary structure comprises 525 residues: Vesicular inhibitory amino acid transporter (525 aa).

The Cytoplasmic segment spans residues 1–132; the sequence is MATLLRSKLT…WNVTNAIQGM (132 aa). The helical transmembrane segment at 133-153 threads the bilayer; it reads FVLGLPYAILHGGYLGLFLII. Over 154 to 204 the chain is Lumenal, vesicle; sequence FAAVVCCYTGKILIACLYEENEDGEVVRVRDSYVAIANACCAPRFPTLGGR. Position 186 is a 3'-nitrotyrosine (Tyr-186). A helical membrane pass occupies residues 205 to 225; the sequence is VVNVAQIIELVMTCILYVVVS. Residues 226–265 lie on the Cytoplasmic side of the membrane; that stretch reads GNLMYNSFPGLPVSQKSWSIIATAVLLPCAFLKNLKAVSK. The chain crosses the membrane as a helical span at residues 266–286; it reads FSLLCTLAHFVINILVIAYCL. Residues 287–305 lie on the Lumenal, vesicle side of the membrane; the sequence is SRARDWAWEKVKFYIDVKK. Residues 306 to 326 form a helical membrane-spanning segment; it reads FPISIGIIVFSYTSQIFLPSL. Over 327-341 the chain is Cytoplasmic; the sequence is EGNMQQPSEFHCMMN. A helical transmembrane segment spans residues 342–362; the sequence is WTHIAACVLKGLFALVAYLTW. Residues 363 to 383 lie on the Lumenal, vesicle side of the membrane; it reads ADETKEVITDNLPGSIRAVVN. The chain crosses the membrane as a helical span at residues 384–404; the sequence is IFLVAKALLSYPLPFFAAVEV. The Cytoplasmic segment spans residues 405–438; that stretch reads LEKSLFQEGSRAFFPACYGGDGRLKSWGLTLRCA. Residues 439-459 traverse the membrane as a helical segment; that stretch reads LVVFTLLMAIYVPHFALLMGL. Residues 460–461 are Lumenal, vesicle-facing; it reads TG. A helical membrane pass occupies residues 462-482; it reads SLTGAGLCFLLPSLFHLRLLW. Residues 483 to 489 lie on the Cytoplasmic side of the membrane; sequence RKLLWHQ. The helical transmembrane segment at 490–510 threads the bilayer; it reads VFFDVAIFVIGGICSVSGFVH. Residues 511–525 are Lumenal, vesicle-facing; the sequence is SLEGLIEAYRTNAED.

The protein belongs to the amino acid/polyamine transporter 2 family. Brain. Expressed at high levels within the neocortex, hippocampus, cerebellum, striatum, septal nuclei and the reticular nucleus of the thalamus. Also expressed in islets where it is more abundant in the peripheral/mantle region. Highly expressed in the nerve endings of GABA neurons in the brain and spinal cord but also in glycinergic nerve endings. Expressed in glycine-, GABA- or GABA- and glycine-containing boutons.

It is found in the cytoplasmic vesicle. Its subcellular location is the secretory vesicle. The protein resides in the synaptic vesicle membrane. It localises to the presynapse. It catalyses the reaction beta-alanine(out) + n H(+)(in) = beta-alanine(in) + n H(+)(out). The enzyme catalyses 4-aminobutanoate(out) + n H(+)(in) = 4-aminobutanoate(in) + n H(+)(out). It carries out the reaction glycine(out) + n H(+)(in) = glycine(in) + n H(+)(out). Antiporter that exchanges vesicular protons for cytosolic 4-aminobutanoate or to a lesser extend glycine, thus allowing their secretion from nerve terminals. The transport is equally dependent on the chemical and electrical components of the proton gradient. May also transport beta-alanine. Acidification of GABAergic synaptic vesicles is a prerequisite for 4-aminobutanoate uptake. The chain is Vesicular inhibitory amino acid transporter from Rattus norvegicus (Rat).